A 565-amino-acid chain; its full sequence is Protein priB (565 aa).

The zn(2)-C6 fungal-type DNA-binding region spans 20–50 (CTTCRAAKMKCVGAEDGQRQCQRCKRANVQC). 2 disordered regions span residues 82–170 (AKSK…SDRA) and 195–224 (NPED…APAG). The segment covering 90-111 (DARHSSSYRDSHPSLGEPDDRY) has biased composition (basic and acidic residues). The segment covering 129-155 (SNLPPLNLPSYPDAASEYTASSTSSRT) has biased composition (low complexity). Over residues 203–215 (GPSSVRCSETYSP) the composition is skewed to polar residues.

The protein resides in the nucleus. The sequence is that of Protein priB (priB) from Lentinula edodes (Shiitake mushroom).